We begin with the raw amino-acid sequence, 192 residues long: Large ribosomal subunit protein bL9 (192 aa).

Residues 173–192 form a disordered region; it reads ALRPEDFFDPEADGVDEDEA. A compositionally biased stretch (acidic residues) spans 179–192; sequence FFDPEADGVDEDEA.

Belongs to the bacterial ribosomal protein bL9 family.

In terms of biological role, binds to the 23S rRNA. This is Large ribosomal subunit protein bL9 (rplI) from Rhizobium leguminosarum bv. trifolii.